Consider the following 125-residue polypeptide: Holo-[acyl-carrier-protein] synthase (125 aa).

Mg(2+) is bound by residues aspartate 8 and glutamate 56.

The protein belongs to the P-Pant transferase superfamily. AcpS family. It depends on Mg(2+) as a cofactor.

The protein resides in the cytoplasm. It catalyses the reaction apo-[ACP] + CoA = holo-[ACP] + adenosine 3',5'-bisphosphate + H(+). Its function is as follows. Transfers the 4'-phosphopantetheine moiety from coenzyme A to a Ser of acyl-carrier-protein. The sequence is that of Holo-[acyl-carrier-protein] synthase from Borrelia turicatae (strain 91E135).